Here is a 480-residue protein sequence, read N- to C-terminus: Aspartyl/glutamyl-tRNA(Asn/Gln) amidotransferase subunit B (480 aa).

The protein belongs to the GatB/GatE family. GatB subfamily. As to quaternary structure, heterotrimer of A, B and C subunits.

It carries out the reaction L-glutamyl-tRNA(Gln) + L-glutamine + ATP + H2O = L-glutaminyl-tRNA(Gln) + L-glutamate + ADP + phosphate + H(+). The enzyme catalyses L-aspartyl-tRNA(Asn) + L-glutamine + ATP + H2O = L-asparaginyl-tRNA(Asn) + L-glutamate + ADP + phosphate + 2 H(+). Allows the formation of correctly charged Asn-tRNA(Asn) or Gln-tRNA(Gln) through the transamidation of misacylated Asp-tRNA(Asn) or Glu-tRNA(Gln) in organisms which lack either or both of asparaginyl-tRNA or glutaminyl-tRNA synthetases. The reaction takes place in the presence of glutamine and ATP through an activated phospho-Asp-tRNA(Asn) or phospho-Glu-tRNA(Gln). This chain is Aspartyl/glutamyl-tRNA(Asn/Gln) amidotransferase subunit B, found in Caldicellulosiruptor bescii (strain ATCC BAA-1888 / DSM 6725 / KCTC 15123 / Z-1320) (Anaerocellum thermophilum).